A 43-amino-acid polypeptide reads, in one-letter code: Protein PsbN (43 aa).

The helical transmembrane segment at 4–24 (AIVLIISVGAALVAVTGYGIY) threads the bilayer.

This sequence belongs to the PsbN family.

It localises to the cellular thylakoid membrane. In terms of biological role, may play a role in photosystem I and II biogenesis. The sequence is that of Protein PsbN from Trichormus variabilis (strain ATCC 29413 / PCC 7937) (Anabaena variabilis).